Consider the following 156-residue polypeptide: Small ribosomal subunit protein uS7 (156 aa).

This sequence belongs to the universal ribosomal protein uS7 family. Part of the 30S ribosomal subunit. Contacts proteins S9 and S11.

In terms of biological role, one of the primary rRNA binding proteins, it binds directly to 16S rRNA where it nucleates assembly of the head domain of the 30S subunit. Is located at the subunit interface close to the decoding center, probably blocks exit of the E-site tRNA. The protein is Small ribosomal subunit protein uS7 of Gemmatimonas aurantiaca (strain DSM 14586 / JCM 11422 / NBRC 100505 / T-27).